The chain runs to 218 residues: uncharacterized protein (218 aa).

Residues 11–31 (AAGLFPLALMLSGCISYALVS) form a helical membrane-spanning segment.

The protein resides in the membrane. This is an uncharacterized protein from Escherichia coli (strain K12).